Here is a 415-residue protein sequence, read N- to C-terminus: ATP-dependent Clp protease ATP-binding subunit ClpX (415 aa).

Residues M1–K52 enclose the ClpX-type ZB domain. Zn(2+) is bound by residues C11, C14, C33, and C36. S121–L128 contacts ATP.

Belongs to the ClpX chaperone family. Component of the ClpX-ClpP complex. Forms a hexameric ring that, in the presence of ATP, binds to fourteen ClpP subunits assembled into a disk-like structure with a central cavity, resembling the structure of eukaryotic proteasomes.

In terms of biological role, ATP-dependent specificity component of the Clp protease. It directs the protease to specific substrates. Can perform chaperone functions in the absence of ClpP. This chain is ATP-dependent Clp protease ATP-binding subunit ClpX, found in Bacteroides fragilis (strain ATCC 25285 / DSM 2151 / CCUG 4856 / JCM 11019 / LMG 10263 / NCTC 9343 / Onslow / VPI 2553 / EN-2).